Here is a 138-residue protein sequence, read N- to C-terminus: Holo-[acyl-carrier-protein] synthase (138 aa).

Mg(2+) is bound by residues aspartate 8 and glutamate 56.

It belongs to the P-Pant transferase superfamily. AcpS family. It depends on Mg(2+) as a cofactor.

The protein localises to the cytoplasm. The catalysed reaction is apo-[ACP] + CoA = holo-[ACP] + adenosine 3',5'-bisphosphate + H(+). Transfers the 4'-phosphopantetheine moiety from coenzyme A to a Ser of acyl-carrier-protein. In Thermoanaerobacter pseudethanolicus (strain ATCC 33223 / 39E) (Clostridium thermohydrosulfuricum), this protein is Holo-[acyl-carrier-protein] synthase.